The primary structure comprises 606 residues: Flagellar WD repeat-containing protein Pf20 (606 aa).

Residues Pro229–Ser250 are disordered. WD repeat units follow at residues Gly324–His354, Gly366–Asp396, Asp408–Asp438, Gly450–Asp480, Gly492–Asp522, Thr534–Ser564, and Gly576–Ser606.

Inter-microtubule bridges in flagella.

It is found in the cell projection. Its subcellular location is the cilium. It localises to the flagellum. The sequence is that of Flagellar WD repeat-containing protein Pf20 (PF20) from Chlamydomonas reinhardtii (Chlamydomonas smithii).